Here is a 266-residue protein sequence, read N- to C-terminus: Maltodextrose utilization protein MalA (266 aa).

Has a role in maltotetraose utilization. In Streptococcus pneumoniae (strain ATCC BAA-255 / R6), this protein is Maltodextrose utilization protein MalA (malA).